We begin with the raw amino-acid sequence, 403 residues long: MIRKKNNKVVLAYSGGLDTSAIIPWLKENYNFEVVAFVADIGQSKKDLNGIEKKSLESGASSCHVFDLKEEFIENYVYPVLKTGALYEGSYLLGTAMARPIIAKKQVELALNIGANSLCHGATGKGNDQVRFEMAYAALAPNLNVIAPWREWNLNSRESLLKYLDKKNISTTATLEKIYSKDENSWHISTEGGLLENPWNQSNEDCWSWTVNPEDAPEKPEYVSLQLKEGCVVSVNNQKLNPLKCVEELNSLGAKHGIGRIDIIENRLIGMKSRGCYETPGGTIIMTAIKAIEQLVLDRESFRWREKIGLEMSSIVYDGRWFSPIRKSLQAAADSLSLEITGEVILKLYKGSVTAVQKKSPNSLYSEEYATFGEDKVYKQSDADGFIRLFSLSSKIRAQNMLK.

ATP is bound by residues 12–20 (AYSGGLDTS) and Ala-39. Tyr-91 is an L-citrulline binding site. An ATP-binding site is contributed by Gly-121. Residues Thr-123, Asn-127, and Asp-128 each coordinate L-aspartate. Residue Asn-127 participates in L-citrulline binding. L-citrulline-binding residues include Arg-131, Ser-180, Ser-189, Glu-265, and Tyr-277.

It belongs to the argininosuccinate synthase family. Type 1 subfamily. In terms of assembly, homotetramer.

It localises to the cytoplasm. It catalyses the reaction L-citrulline + L-aspartate + ATP = 2-(N(omega)-L-arginino)succinate + AMP + diphosphate + H(+). It participates in amino-acid biosynthesis; L-arginine biosynthesis; L-arginine from L-ornithine and carbamoyl phosphate: step 2/3. The protein is Argininosuccinate synthase of Buchnera aphidicola subsp. Acyrthosiphon pisum (strain 5A).